The primary structure comprises 93 residues: Pyrimidine/purine nucleoside phosphorylase (93 aa).

It belongs to the nucleoside phosphorylase PpnP family.

It carries out the reaction a purine D-ribonucleoside + phosphate = a purine nucleobase + alpha-D-ribose 1-phosphate. The catalysed reaction is adenosine + phosphate = alpha-D-ribose 1-phosphate + adenine. The enzyme catalyses cytidine + phosphate = cytosine + alpha-D-ribose 1-phosphate. It catalyses the reaction guanosine + phosphate = alpha-D-ribose 1-phosphate + guanine. It carries out the reaction inosine + phosphate = alpha-D-ribose 1-phosphate + hypoxanthine. The catalysed reaction is thymidine + phosphate = 2-deoxy-alpha-D-ribose 1-phosphate + thymine. The enzyme catalyses uridine + phosphate = alpha-D-ribose 1-phosphate + uracil. It catalyses the reaction xanthosine + phosphate = alpha-D-ribose 1-phosphate + xanthine. Functionally, catalyzes the phosphorolysis of diverse nucleosides, yielding D-ribose 1-phosphate and the respective free bases. Can use uridine, adenosine, guanosine, cytidine, thymidine, inosine and xanthosine as substrates. Also catalyzes the reverse reactions. The sequence is that of Pyrimidine/purine nucleoside phosphorylase from Pseudomonas savastanoi pv. phaseolicola (strain 1448A / Race 6) (Pseudomonas syringae pv. phaseolicola (strain 1448A / Race 6)).